Reading from the N-terminus, the 484-residue chain is Chromosomal replication initiator protein DnaA (484 aa).

Positions 1 to 73 (MQEGKNIWSL…EILIEKGHNT (73 aa)) are domain I, interacts with DnaA modulators. Residues 73–140 (TINVEFINSP…EEIHTKYRNP (68 aa)) form a domain II region. The tract at residues 141–357 (FLKKKYTFEN…AAVTKLKAHI (217 aa)) is domain III, AAA+ region. 4 residues coordinate ATP: Gly-185, Gly-187, Lys-188, and Thr-189. Residues 358-484 (DLEDIEIDTS…IELMNKINKK (127 aa)) form a domain IV, binds dsDNA region.

This sequence belongs to the DnaA family. Oligomerizes as a right-handed, spiral filament on DNA at oriC.

The protein resides in the cytoplasm. Plays an essential role in the initiation and regulation of chromosomal replication. ATP-DnaA binds to the origin of replication (oriC) to initiate formation of the DNA replication initiation complex once per cell cycle. Binds the DnaA box (a 9 base pair repeat at the origin) and separates the double-stranded (ds)DNA. Forms a right-handed helical filament on oriC DNA; dsDNA binds to the exterior of the filament while single-stranded (ss)DNA is stabiized in the filament's interior. The ATP-DnaA-oriC complex binds and stabilizes one strand of the AT-rich DNA unwinding element (DUE), permitting loading of DNA polymerase. After initiation quickly degrades to an ADP-DnaA complex that is not apt for DNA replication. Binds acidic phospholipids. This Borrelia hermsii (strain HS1 / DAH) protein is Chromosomal replication initiator protein DnaA.